The chain runs to 577 residues: Outer spore wall assembly protein SHE10 (577 aa).

Residues 1-23 (MGKLIKLITTLTVLVSLLQYCCE) form the signal peptide. Coiled-coil stretches lie at residues 379–416 (NETR…ENVE) and 513–561 (ILRS…EEDV). Residues 525–545 (RERKERERKEREKAAAEEFQR) show a composition bias toward basic and acidic residues. Residues 525 to 577 (RERKERERKEREKAAAEEFQRQQELLLQQEEEDEEDVSYTSTSTITTTTTMTL) form a disordered region. Residues 562–577 (SYTSTSTITTTTTMTL) are compositionally biased toward low complexity.

The protein belongs to the SHE10 family. As to quaternary structure, component of the mitochondria-localized RNase mitochondrial RNA-processing (RNase MRP) composed of one single RNA encoded by the NME1 gene and at least 31 proteins. Absent in the nucleus-localized RNase MRP (NuMRP).

Its subcellular location is the mitochondrion. In terms of biological role, involved in spore wall assembly. May be a component of the mitochondrial RNase MRP (MtMRP), a ribonucleoprotein endoribonuclease involved in the cleaving RNA transcripts to generate primers for DNA replication in mitochondria. This is Outer spore wall assembly protein SHE10 from Saccharomyces cerevisiae (strain RM11-1a) (Baker's yeast).